The sequence spans 1032 residues: Probable ATP-dependent RNA helicase DDX46 (1032 aa).

A compositionally biased stretch (basic residues) spans 1-24 (MGRESRHYRKRSASRGRSGSRSRS). Residues 1–227 (MGRESRHYRK…TEMEDEELDP (227 aa)) are disordered. Gly2 carries N-myristoyl glycine lipidation. Residues 26–49 (SPSDKRSKRGDDRRSRSRDRDRRR) show a composition bias toward basic and acidic residues. Composition is skewed to basic residues over residues 50-73 (ERSR…RSRS) and 81-103 (ERRR…RRSR). The span at 112 to 200 (KKTENRSRSK…EMKQGKKWSL (89 aa)) shows a compositional bias: basic and acidic residues. Residues 152 to 197 (DQNKLEEEMRKRKERVEKWREEQRKKAMENIGELKKEIEEMKQGKK) adopt a coiled-coil conformation. Residue Lys186 forms a Glycyl lysine isopeptide (Lys-Gly) (interchain with G-Cter in SUMO2) linkage. Phosphoserine is present on Ser199. Positions 201–211 (EDDDDDEDDPA) are enriched in acidic residues. Lys263 is modified (N6-acetyllysine). A Phosphotyrosine modification is found at Tyr294. 2 positions are modified to phosphoserine: Ser295 and Ser296. A Glycyl lysine isopeptide (Lys-Gly) (interchain with G-Cter in SUMO2) cross-link involves residue Lys325. Residue Ser346 is modified to Phosphoserine. Residues 372–400 (KSWVQCGISMKILNSLKKHGYEKPTPIQT) carry the Q motif motif. The 179-residue stretch at 403–581 (IPAIMSGRDL…RRILSKPIEV (179 aa)) folds into the Helicase ATP-binding domain. Residue 416 to 423 (AKTGSGKT) participates in ATP binding. Positions 529–532 (DEAD) match the DEAD box motif. The Helicase C-terminal domain occupies 592–753 (DVEQQVIVIE…AVPPDLEKLW (162 aa)). Lys776 carries the post-translational modification N6-acetyllysine. Lys779 participates in a covalent cross-link: Glycyl lysine isopeptide (Lys-Gly) (interchain with G-Cter in SUMO2). A Phosphoserine modification is found at Ser804. Lys904 bears the N6-acetyllysine mark. Glycyl lysine isopeptide (Lys-Gly) (interchain with G-Cter in SUMO2) cross-links involve residues Lys908 and Lys916. Position 929 is a phosphoserine (Ser929).

Belongs to the DEAD box helicase family. DDX46/PRP5 subfamily. In terms of assembly, component of the 17S U2 SnRNP complex, a ribonucleoprotein complex that contains small nuclear RNA (snRNA) U2 and a number of specific proteins. Within the 17S U2 SnRNP complex, DDX46 is part of the SF3B subcomplex, which is required for 'A' complex assembly formed by the stable binding of U2 snRNP to the branchpoint sequence in pre-mRNA. Recruited to the 17S U2 SnRNP complex following release of DDX42; DDX42 and DDX46 bind the SF3B subcomplex in a competitive manner.

Its subcellular location is the nucleus speckle. The protein localises to the nucleus. It is found in the cajal body. The catalysed reaction is ATP + H2O = ADP + phosphate + H(+). Functionally, component of the 17S U2 SnRNP complex of the spliceosome, a large ribonucleoprotein complex that removes introns from transcribed pre-mRNAs. The 17S U2 SnRNP complex (1) directly participates in early spliceosome assembly and (2) mediates recognition of the intron branch site during pre-mRNA splicing by promoting the selection of the pre-mRNA branch-site adenosine, the nucleophile for the first step of splicing. Within the 17S U2 SnRNP complex, DDX46 plays essential roles during assembly of pre-spliceosome and proofreading of the branch site. The chain is Probable ATP-dependent RNA helicase DDX46 (Ddx46) from Mus musculus (Mouse).